The primary structure comprises 204 residues: Outer-membrane lipoprotein carrier protein (204 aa).

An N-terminal signal peptide occupies residues 1-21 (MKKIAVTCALLSAFAVSSVWA). The segment at 169–204 (QRSSYQLKSQQNGAVDMSKFTFTPPQGVTVDDQRNK) is disordered. Residues 171–181 (SSYQLKSQQNG) show a composition bias toward polar residues.

It belongs to the LolA family. Monomer.

The protein resides in the periplasm. In terms of biological role, participates in the translocation of lipoproteins from the inner membrane to the outer membrane. Only forms a complex with a lipoprotein if the residue after the N-terminal Cys is not an aspartate (The Asp acts as a targeting signal to indicate that the lipoprotein should stay in the inner membrane). The polypeptide is Outer-membrane lipoprotein carrier protein (Cronobacter sakazakii (strain ATCC BAA-894) (Enterobacter sakazakii)).